Here is a 91-residue protein sequence, read N- to C-terminus: Small ribosomal subunit protein uS19 (91 aa).

Belongs to the universal ribosomal protein uS19 family.

Protein S19 forms a complex with S13 that binds strongly to the 16S ribosomal RNA. This Ralstonia nicotianae (strain ATCC BAA-1114 / GMI1000) (Ralstonia solanacearum) protein is Small ribosomal subunit protein uS19.